A 384-amino-acid chain; its full sequence is Aurora kinase (384 aa).

Polar residues-rich tracts occupy residues M1 to N12 and S19 to L29. A disordered region spans residues M1–V100. The span at Q30–S99 shows a compositional bias: low complexity. Positions F110–I360 constitute a Protein kinase domain. Residues L116 to V124 and K139 contribute to the ATP site. Catalysis depends on D233, which acts as the Proton acceptor.

Belongs to the protein kinase superfamily. Ser/Thr protein kinase family. Aurora subfamily. As to quaternary structure, interacts with icpA. Forms a complex at the central spindle.

Its subcellular location is the cytoplasm. It localises to the chromosome. It is found in the centromere. The protein resides in the cytoskeleton. The protein localises to the spindle pole. Its subcellular location is the cleavage furrow. It localises to the cell projection. It is found in the neuron projection. The catalysed reaction is L-seryl-[protein] + ATP = O-phospho-L-seryl-[protein] + ADP + H(+). It catalyses the reaction L-threonyl-[protein] + ATP = O-phospho-L-threonyl-[protein] + ADP + H(+). In terms of biological role, part of a chromosomal passenger complex. This is Aurora kinase (aurK) from Dictyostelium discoideum (Social amoeba).